A 246-amino-acid polypeptide reads, in one-letter code: ATP synthase subunit b 1 (246 aa).

Residues 5–27 (WFTFTAQVINFLVLVGLLRYFLY) traverse the membrane as a helical segment.

Belongs to the ATPase B chain family. As to quaternary structure, F-type ATPases have 2 components, F(1) - the catalytic core - and F(0) - the membrane proton channel. F(1) has five subunits: alpha(3), beta(3), gamma(1), delta(1), epsilon(1). F(0) has three main subunits: a(1), b(2) and c(10-14). The alpha and beta chains form an alternating ring which encloses part of the gamma chain. F(1) is attached to F(0) by a central stalk formed by the gamma and epsilon chains, while a peripheral stalk is formed by the delta and b chains.

The protein resides in the cell inner membrane. Its function is as follows. F(1)F(0) ATP synthase produces ATP from ADP in the presence of a proton or sodium gradient. F-type ATPases consist of two structural domains, F(1) containing the extramembraneous catalytic core and F(0) containing the membrane proton channel, linked together by a central stalk and a peripheral stalk. During catalysis, ATP synthesis in the catalytic domain of F(1) is coupled via a rotary mechanism of the central stalk subunits to proton translocation. Functionally, component of the F(0) channel, it forms part of the peripheral stalk, linking F(1) to F(0). This is ATP synthase subunit b 1 from Rhodopirellula baltica (strain DSM 10527 / NCIMB 13988 / SH1).